The chain runs to 172 residues: Large ribosomal subunit protein uL10 (172 aa).

This sequence belongs to the universal ribosomal protein uL10 family. In terms of assembly, part of the ribosomal stalk of the 50S ribosomal subunit. The N-terminus interacts with L11 and the large rRNA to form the base of the stalk. The C-terminus forms an elongated spine to which L12 dimers bind in a sequential fashion forming a multimeric L10(L12)X complex.

In terms of biological role, forms part of the ribosomal stalk, playing a central role in the interaction of the ribosome with GTP-bound translation factors. This chain is Large ribosomal subunit protein uL10, found in Ruegeria pomeroyi (strain ATCC 700808 / DSM 15171 / DSS-3) (Silicibacter pomeroyi).